We begin with the raw amino-acid sequence, 740 residues long: MLKLFSAFRKNKIWDFNGGIHPPEMKTQSNGTPLRQVPLAQRFVIPLKQHIGAEGELCVSVGDKVLRGQPLTRGRGKMLPVHAPTSGTVTAIAPHSTAHPSALAELSVIIDADGEDCWIPRDGWDDYRSRSREELIERIHQFGVAGLGGAGFPTGVKLQGGGDKIETLIINAAECEPYITADDRLMQDCAAQVVEGIRILAHILQPREILIGIEDNKPQAISMLRAVLADSHDITLRVIPTKYPSGGAKQLTYILTGKQVPHGGRSSDIGVLMQNVGTAYAVKRAVIDGEPITERVVTLTGEAIARPGNVWARLGTPVRHLLNDAGFCPSADQMVIMGGPLMGFTLPWLDVPVVKITNCLLAPSANELGEPQEEQSCIRCSACADACPADLLPQQLYWFSKGQQHDKATTHNIADCIECGACAWVCPSNIPLVQYFRQEKAEIAAIRQEEKRAAEAKARFEARQARLEREKAARLERHKSAAVQPAAKDKDAIAAALARVKEKQAQATQPIVIKAGERPDNSAIIAAREARKAQARAKQAELQQTNDAATVADPRKTAVEAAIARAKARKLEQQQANAEPEEQVDPRKAAVEAAIARAKARKLEQQQANAEPEQQVDPRKAAVEAAIARAKARKLEQQQANAEPEEQVDPRKAAVEAAIARAKARKLEQQQANAEPEEQVDPRKAAVEAAIARAKARKLEQQQANAEPEEQIDPRKAAVAAAIARVQAKKAAQQKVVNED.

2 4Fe-4S ferredoxin-type domains span residues 369 to 397 and 407 to 436; these read GEPQ…QQLY and KATT…VQYF. The [4Fe-4S] cluster site is built by Cys377, Cys380, Cys383, Cys387, Cys416, Cys419, Cys422, and Cys426. A disordered region spans residues 602 to 714; that stretch reads KLEQQQANAE…NAEPEEQIDP (113 aa). Low complexity predominate over residues 605-615; the sequence is QQQANAEPEQQ.

This sequence belongs to the 4Fe4S bacterial-type ferredoxin family. RnfC subfamily. As to quaternary structure, the complex is composed of six subunits: RsxA, RsxB, RsxC, RsxD, RsxE and RsxG. It depends on [4Fe-4S] cluster as a cofactor.

It is found in the cell inner membrane. In terms of biological role, part of a membrane-bound complex that couples electron transfer with translocation of ions across the membrane. Required to maintain the reduced state of SoxR. The chain is Ion-translocating oxidoreductase complex subunit C from Escherichia coli O17:K52:H18 (strain UMN026 / ExPEC).